A 288-amino-acid polypeptide reads, in one-letter code: 3'-5' exonuclease (288 aa).

Positions 30 to 67 (RSSSSSSSAAPTVQATTSVHGHEEDPNQIPNNIRRQLP) are disordered. 2 stretches are compositionally biased toward polar residues: residues 38–48 (AAPTVQATTSV) and 57–67 (QIPNNIRRQLP). The 151-residue stretch at 129–279 (FVGLDIEWRP…ASWHLYKVLK (151 aa)) folds into the 3'-5' exonuclease domain.

As to quaternary structure, interacts with KU70 and KU80. Interacts with RECQL2. Mg(2+) serves as cofactor. It depends on Mn(2+) as a cofactor. As to expression, expressed ubiquitously.

It is found in the nucleus. Its activity is regulated as follows. Activated upon interaction with the KU heterodimer. Not stimulated by ATP. Exonuclease that digests recessed strands of DNA duplexes in the 3' to 5' direction but hardly single-stranded DNA or blunt-ended duplexes. Also able to digest 3'-protruding strands and 3'-recessed strand termini of duplexes containing mismatched bases. The protein is 3'-5' exonuclease (WEX) of Arabidopsis thaliana (Mouse-ear cress).